Consider the following 342-residue polypeptide: Oxygen-dependent coproporphyrinogen-III oxidase (342 aa).

Ser98 is a binding site for substrate. A divalent metal cation contacts are provided by His102 and His112. Catalysis depends on His112, which acts as the Proton donor. Residue 114–116 (NYR) participates in substrate binding. A divalent metal cation is bound by residues His146 and His176. An important for dimerization region spans residues 266–301 (YVEFNLVWDRGTIFGLQTNGRTESILMSLPPLARWE).

This sequence belongs to the aerobic coproporphyrinogen-III oxidase family. In terms of assembly, homodimer. The cofactor is a divalent metal cation.

The protein resides in the cytoplasm. The enzyme catalyses coproporphyrinogen III + O2 + 2 H(+) = protoporphyrinogen IX + 2 CO2 + 2 H2O. It functions in the pathway porphyrin-containing compound metabolism; protoporphyrin-IX biosynthesis; protoporphyrinogen-IX from coproporphyrinogen-III (O2 route): step 1/1. Its function is as follows. Involved in the heme and chlorophyll biosynthesis. Catalyzes the aerobic oxidative decarboxylation of propionate groups of rings A and B of coproporphyrinogen-III to yield the vinyl groups in protoporphyrinogen-IX. This Prochlorococcus marinus (strain MIT 9312) protein is Oxygen-dependent coproporphyrinogen-III oxidase.